Reading from the N-terminus, the 583-residue chain is Alpha-1,3-arabinosyltransferase XAT2 (583 aa).

The Cytoplasmic portion of the chain corresponds to 1-21 (MKPVERAKLVRSLRQESRRLR). The chain crosses the membrane as a helical; Signal-anchor for type II membrane protein span at residues 22–42 (LLVLVIGFFLVTLTFVVISKP). Residues 43 to 583 (DALLFNLNGR…LLEVLDQLNQ (541 aa)) are Lumenal-facing. The interval 73–178 (RRSADTFPAA…NGKQEDGKPN (106 aa)) is disordered. Basic and acidic residues-rich tracts occupy residues 102-121 (TSEEEKRLLSSEPEQGKNEE) and 135-146 (EDNKNGEEEGHT). Positions 149–160 (SKVTLPTVSNYT) are enriched in polar residues. A glycan (N-linked (GlcNAc...) asparagine) is linked at asparagine 158. Over residues 162–178 (RDAEDTDNGKQEDGKPN) the composition is skewed to basic and acidic residues. N-linked (GlcNAc...) asparagine glycosylation is found at asparagine 229, asparagine 382, asparagine 450, and asparagine 485.

It belongs to the glycosyltransferase 61 family.

It localises to the golgi apparatus membrane. It participates in glycan metabolism. Its function is as follows. Glycosyltransferase involved in the arabinosylation of xylan, the major hemicellulose (non-cellulosic component) of primary and secondary walls of angiosperms. Possesses alpha-1,3-arabinosyltransferase activity, transferring an arabinofuranose residue to the xylan backbone. In Oryza sativa subsp. japonica (Rice), this protein is Alpha-1,3-arabinosyltransferase XAT2.